Consider the following 387-residue polypeptide: Galactokinase (387 aa).

Position 33-36 (Glu33–Asp36) interacts with substrate. ATP-binding positions include Ser67 and Gly124 to Ser130. Ser130 and Glu162 together coordinate Mg(2+). Asp174 serves as the catalytic Proton acceptor. Residue Tyr224 coordinates substrate.

It belongs to the GHMP kinase family. GalK subfamily.

It localises to the cytoplasm. The catalysed reaction is alpha-D-galactose + ATP = alpha-D-galactose 1-phosphate + ADP + H(+). The protein operates within carbohydrate metabolism; galactose metabolism. Its function is as follows. Catalyzes the transfer of the gamma-phosphate of ATP to D-galactose to form alpha-D-galactose-1-phosphate (Gal-1-P). This Clostridium perfringens (strain SM101 / Type A) protein is Galactokinase.